The following is a 73-amino-acid chain: UPF0235 protein PERMA_1406 (73 aa).

It belongs to the UPF0235 family.

The protein is UPF0235 protein PERMA_1406 of Persephonella marina (strain DSM 14350 / EX-H1).